The sequence spans 254 residues: Triosephosphate isomerase (254 aa).

12–14 (NWK) lines the substrate pocket. H99 acts as the Electrophile in catalysis. E169 serves as the catalytic Proton acceptor. Residues G175, S214, and 235 to 236 (GG) each bind substrate.

This sequence belongs to the triosephosphate isomerase family. As to quaternary structure, homodimer.

The protein resides in the cytoplasm. It catalyses the reaction D-glyceraldehyde 3-phosphate = dihydroxyacetone phosphate. Its pathway is carbohydrate biosynthesis; gluconeogenesis. It functions in the pathway carbohydrate degradation; glycolysis; D-glyceraldehyde 3-phosphate from glycerone phosphate: step 1/1. In terms of biological role, involved in the gluconeogenesis. Catalyzes stereospecifically the conversion of dihydroxyacetone phosphate (DHAP) to D-glyceraldehyde-3-phosphate (G3P). The chain is Triosephosphate isomerase from Xanthobacter autotrophicus (strain ATCC BAA-1158 / Py2).